The primary structure comprises 1402 residues: DNA-directed RNA polymerase subunit beta' (1402 aa).

Zn(2+)-binding residues include cysteine 72, cysteine 74, cysteine 87, and cysteine 90. Mg(2+) is bound by residues aspartate 463, aspartate 465, and aspartate 467. Residues cysteine 811, cysteine 885, cysteine 892, and cysteine 895 each contribute to the Zn(2+) site.

This sequence belongs to the RNA polymerase beta' chain family. As to quaternary structure, the RNAP catalytic core consists of 2 alpha, 1 beta, 1 beta' and 1 omega subunit. When a sigma factor is associated with the core the holoenzyme is formed, which can initiate transcription. Mg(2+) serves as cofactor. Requires Zn(2+) as cofactor.

The catalysed reaction is RNA(n) + a ribonucleoside 5'-triphosphate = RNA(n+1) + diphosphate. Its function is as follows. DNA-dependent RNA polymerase catalyzes the transcription of DNA into RNA using the four ribonucleoside triphosphates as substrates. In Paracoccus denitrificans (strain Pd 1222), this protein is DNA-directed RNA polymerase subunit beta'.